The chain runs to 1178 residues: DNA-directed RNA polymerase subunit beta' (1178 aa).

Zn(2+)-binding residues include cysteine 60, cysteine 62, cysteine 75, and cysteine 78. Positions 450, 452, and 454 each coordinate Mg(2+). The Zn(2+) site is built by cysteine 795, cysteine 869, cysteine 876, and cysteine 879.

It belongs to the RNA polymerase beta' chain family. The RNAP catalytic core consists of 2 alpha, 1 beta, 1 beta' and 1 omega subunit. When a sigma factor is associated with the core the holoenzyme is formed, which can initiate transcription. It depends on Mg(2+) as a cofactor. Zn(2+) is required as a cofactor.

It catalyses the reaction RNA(n) + a ribonucleoside 5'-triphosphate = RNA(n+1) + diphosphate. DNA-dependent RNA polymerase catalyzes the transcription of DNA into RNA using the four ribonucleoside triphosphates as substrates. In Clostridium botulinum (strain Okra / Type B1), this protein is DNA-directed RNA polymerase subunit beta'.